A 331-amino-acid polypeptide reads, in one-letter code: Holliday junction branch migration complex subunit RuvB (331 aa).

The tract at residues Lys-4 to Tyr-182 is large ATPase domain (RuvB-L). ATP-binding positions include Arg-22, Gly-63, Lys-66, Thr-67, Thr-68, Glu-129–Phe-131, Arg-172, Tyr-182, and Arg-219. Thr-67 provides a ligand contact to Mg(2+). Residues Ser-183–Gly-253 form a small ATPAse domain (RuvB-S) region. The head domain (RuvB-H) stretch occupies residues Lys-256–Met-331. 2 residues coordinate DNA: Arg-309 and Arg-314.

The protein belongs to the RuvB family. In terms of assembly, homohexamer. Forms an RuvA(8)-RuvB(12)-Holliday junction (HJ) complex. HJ DNA is sandwiched between 2 RuvA tetramers; dsDNA enters through RuvA and exits via RuvB. An RuvB hexamer assembles on each DNA strand where it exits the tetramer. Each RuvB hexamer is contacted by two RuvA subunits (via domain III) on 2 adjacent RuvB subunits; this complex drives branch migration. In the full resolvosome a probable DNA-RuvA(4)-RuvB(12)-RuvC(2) complex forms which resolves the HJ.

It localises to the cytoplasm. The catalysed reaction is ATP + H2O = ADP + phosphate + H(+). In terms of biological role, the RuvA-RuvB-RuvC complex processes Holliday junction (HJ) DNA during genetic recombination and DNA repair, while the RuvA-RuvB complex plays an important role in the rescue of blocked DNA replication forks via replication fork reversal (RFR). RuvA specifically binds to HJ cruciform DNA, conferring on it an open structure. The RuvB hexamer acts as an ATP-dependent pump, pulling dsDNA into and through the RuvAB complex. RuvB forms 2 homohexamers on either side of HJ DNA bound by 1 or 2 RuvA tetramers; 4 subunits per hexamer contact DNA at a time. Coordinated motions by a converter formed by DNA-disengaged RuvB subunits stimulates ATP hydrolysis and nucleotide exchange. Immobilization of the converter enables RuvB to convert the ATP-contained energy into a lever motion, pulling 2 nucleotides of DNA out of the RuvA tetramer per ATP hydrolyzed, thus driving DNA branch migration. The RuvB motors rotate together with the DNA substrate, which together with the progressing nucleotide cycle form the mechanistic basis for DNA recombination by continuous HJ branch migration. Branch migration allows RuvC to scan DNA until it finds its consensus sequence, where it cleaves and resolves cruciform DNA. This Ehrlichia ruminantium (strain Gardel) protein is Holliday junction branch migration complex subunit RuvB.